The following is a 172-amino-acid chain: DNA-directed RNA polymerase II subunit RPB7 (172 aa).

It belongs to the eukaryotic RPB7/RPC8 RNA polymerase subunit family. In terms of assembly, component of the RNA polymerase II (Pol II) complex consisting of 12 subunits. RPB4 and RPB7 form a subcomplex that protrudes from the 10-subunit Pol II core complex.

The protein resides in the nucleus. Its function is as follows. DNA-dependent RNA polymerase catalyzes the transcription of DNA into RNA using the four ribonucleoside triphosphates as substrates. Component of RNA polymerase II which synthesizes mRNA precursors and many functional non-coding RNAs. Pol II is the central component of the basal RNA polymerase II transcription machinery. It is composed of mobile elements that move relative to each other. RPB7 is part of a subcomplex with RPB4 that binds to a pocket formed by RPB1, RPB2 and RPB6 at the base of the clamp element. The RPB4-RPB7 subcomplex seems to lock the clamp via RPB7 in the closed conformation thus preventing double-stranded DNA to enter the active site cleft. The RPB4-RPB7 subcomplex binds single-stranded DNA and RNA. The protein is DNA-directed RNA polymerase II subunit RPB7 (polr2g) of Danio rerio (Zebrafish).